The chain runs to 568 residues: Protein disconnected (568 aa).

Residues Gly-16–Asn-77 form a disordered region. Positions Pro-19–Leu-29 are enriched in basic residues. Residues Pro-30–Gly-45 show a composition bias toward low complexity. A compositionally biased stretch (gly residues) spans Gly-46–Ser-62. C2H2-type zinc fingers lie at residues Val-92 to His-115 and His-120 to Asn-145. 4 disordered regions span residues Arg-134–Ile-157, Leu-220–Phe-364, Ser-391–Ser-419, and Gln-501–Val-568. The segment covering Asn-235–Asp-246 has biased composition (acidic residues). A compositionally biased stretch (polar residues) spans Gln-253–Ser-263. Residues Ser-282–Ala-292 are compositionally biased toward low complexity. Residues Ser-313–Pro-360 are compositionally biased toward basic and acidic residues. The segment covering Ser-391–Ala-402 has biased composition (low complexity). Positions His-520–His-550 are enriched in basic residues. The segment covering Ser-558–Val-568 has biased composition (polar residues).

As to expression, expressed at low levels in the adult head and very low, but detectable, levels in the body.

The protein resides in the nucleus. Functionally, required for the establishment of stable connections between the larval optic nerves, the Bolwig's nerves, and their target cells in the brain during embryonic development. This Drosophila melanogaster (Fruit fly) protein is Protein disconnected (disco).